The primary structure comprises 784 residues: Ubiquitin carboxyl-terminal hydrolase 1 (784 aa).

Disordered regions lie at residues 1-21 (MPGV…SKKN) and 33-54 (TKRA…EYRG). Residues 7 to 16 (SESNGLSRGS) show a composition bias toward polar residues. A phosphoserine mark is found at Ser-16, Ser-42, and Ser-67. Positions 81–784 (VGLNNLGNTC…TPYLLFYKKL (704 aa)) constitute a USP domain. The active-site Nucleophile is the Cys-90. Composition is skewed to basic and acidic residues over residues 232-243 (KVEEKSLQKEET) and 252-264 (DSTR…KEQL). Disordered stretches follow at residues 232-341 (KVEE…KINW) and 363-411 (TNQR…SSEA). The span at 389-407 (NTVNGSGPASPGSSVTPVD) shows a compositional bias: polar residues. Ser-475 bears the Phosphoserine mark. His-593 (proton acceptor) is an active-site residue. The segment at 686–723 (PEKVVGTPFTDSRNSETNDTNGTQESDRSKESSDQTGI) is disordered. Polar residues predominate over residues 694 to 709 (FTDSRNSETNDTNGTQ). Residue Ser-767 is modified to Phosphoserine.

It belongs to the peptidase C19 family. As to quaternary structure, interacts with FANCD2 and PCNA. Interacts with WDR48. Interacts with ATAD5; the interaction regulates USP1-mediated PCNA deubiquitination. In terms of processing, autocatalytic cleavage of USP1 following UV irradiation inactivates it, leading to an increase in ubiquitinated PCNA, recruitment of POLH and translesion synthesis. Ubiquitinated by the CRL2(KLHDC2) complex following autocatalytic cleavage, leading to its degradation: the CRL2(KLHDC2) complex recognizes the diglycine (Gly-Gly) at the C-terminus.

The protein resides in the nucleus. The enzyme catalyses Thiol-dependent hydrolysis of ester, thioester, amide, peptide and isopeptide bonds formed by the C-terminal Gly of ubiquitin (a 76-residue protein attached to proteins as an intracellular targeting signal).. Functionally, negative regulator of DNA damage repair which specifically deubiquitinates monoubiquitinated FANCD2. Also involved in PCNA-mediated translesion synthesis (TLS) by deubiquitinating monoubiquitinated PCNA. Has almost no deubiquitinating activity by itself and requires the interaction with WDR48 to have a high activity. The sequence is that of Ubiquitin carboxyl-terminal hydrolase 1 from Rattus norvegicus (Rat).